The sequence spans 247 residues: MQLQVARHRPGTGEDRLMLEARKLVKSYALPGQPPLKILDGIDLSVAPGEMVTVIGASGSGKTTLLNLLGTLDTPDEGELIFDGSPVFQGSRCLLSKKELAAFRNRKIGFVFQFHHLLSDFTALENVAMAEFIGTGKLKPAKERAAVLLEKLGLKARLDHLPSELSGGEQQRVAIARALMNKPKLVLADEPSGNLDSRNSRMLYELMASLSKERQTSFVIVTHNEEFAATADRCLHMQDGRLQACGG.

Residues 19-247 (LEARKLVKSY…QDGRLQACGG (229 aa)) form the ABC transporter domain. Residue 56 to 63 (GASGSGKT) participates in ATP binding.

This sequence belongs to the ABC transporter superfamily. Lipoprotein translocase (TC 3.A.1.125) family. In terms of assembly, the complex is composed of two ATP-binding proteins (LolD) and two transmembrane proteins (LolC and LolE).

The protein localises to the cell inner membrane. In terms of biological role, part of the ABC transporter complex LolCDE involved in the translocation of mature outer membrane-directed lipoproteins, from the inner membrane to the periplasmic chaperone, LolA. Responsible for the formation of the LolA-lipoprotein complex in an ATP-dependent manner. The protein is Lipoprotein-releasing system ATP-binding protein LolD 2 of Chlorobaculum tepidum (strain ATCC 49652 / DSM 12025 / NBRC 103806 / TLS) (Chlorobium tepidum).